A 168-amino-acid chain; its full sequence is Photosystem I assembly protein Ycf3 (168 aa).

3 TPR repeats span residues 35–68, 72–105, and 120–153; these read AFTY…EIDP, SYIL…NPFL, and GEQA…TPGN.

It belongs to the Ycf3 family.

The protein localises to the plastid. It localises to the chloroplast thylakoid membrane. Its function is as follows. Essential for the assembly of the photosystem I (PSI) complex. May act as a chaperone-like factor to guide the assembly of the PSI subunits. This is Photosystem I assembly protein Ycf3 from Acorus calamus var. americanus (American sweet flag).